The sequence spans 286 residues: Thiazole synthase (286 aa).

The active-site Schiff-base intermediate with DXP is lysine 122. 1-deoxy-D-xylulose 5-phosphate contacts are provided by residues glycine 183, 209–210 (AG), and 231–232 (NT).

It belongs to the ThiG family. As to quaternary structure, homotetramer. Forms heterodimers with either ThiH or ThiS.

Its subcellular location is the cytoplasm. It catalyses the reaction [ThiS sulfur-carrier protein]-C-terminal-Gly-aminoethanethioate + 2-iminoacetate + 1-deoxy-D-xylulose 5-phosphate = [ThiS sulfur-carrier protein]-C-terminal Gly-Gly + 2-[(2R,5Z)-2-carboxy-4-methylthiazol-5(2H)-ylidene]ethyl phosphate + 2 H2O + H(+). It functions in the pathway cofactor biosynthesis; thiamine diphosphate biosynthesis. In terms of biological role, catalyzes the rearrangement of 1-deoxy-D-xylulose 5-phosphate (DXP) to produce the thiazole phosphate moiety of thiamine. Sulfur is provided by the thiocarboxylate moiety of the carrier protein ThiS. In vitro, sulfur can be provided by H(2)S. The sequence is that of Thiazole synthase from Synechococcus elongatus (strain ATCC 33912 / PCC 7942 / FACHB-805) (Anacystis nidulans R2).